We begin with the raw amino-acid sequence, 189 residues long: dTTP/UTP pyrophosphatase (189 aa).

The active-site Proton acceptor is Asp-70. Cysteines 74 and 79 form a disulfide.

This sequence belongs to the Maf family. YhdE subfamily. In terms of assembly, homodimer. The cofactor is a divalent metal cation.

The protein resides in the cytoplasm. It carries out the reaction dTTP + H2O = dTMP + diphosphate + H(+). The enzyme catalyses UTP + H2O = UMP + diphosphate + H(+). It catalyses the reaction CTP + H2O = CMP + diphosphate + H(+). The catalysed reaction is psi-UTP + H2O = psi-UMP + diphosphate + H(+). It carries out the reaction 5-methyl-CTP + H2O = 5-methyl-CMP + diphosphate + H(+). The enzyme catalyses 5-methyl-UTP + H2O = 5-methyl-UMP + diphosphate + H(+). Nucleoside triphosphate pyrophosphatase that hydrolyzes dTTP and UTP. Can also hydrolyze CTP and the modified nucleotides pseudo-UTP, 5-methyl-CTP (m(5)CTP) and 5-methyl-UTP (m(5)UTP). May have a dual role in cell division arrest and in preventing the incorporation of modified nucleotides into cellular nucleic acids. The polypeptide is dTTP/UTP pyrophosphatase (Bacillus subtilis (strain 168)).